The following is a 160-amino-acid chain: Deoxyuridine 5'-triphosphate nucleotidohydrolase (160 aa).

Substrate contacts are provided by residues 76–78 (RSG), Asn89, and 93–95 (TID). A compositionally biased stretch (basic and acidic residues) spans 139 to 149 (HTLSDTERGED). Residues 139-160 (HTLSDTERGEDGFGSTGHGSHQ) are disordered. Positions 150 to 160 (GFGSTGHGSHQ) are enriched in gly residues.

This sequence belongs to the dUTPase family. It depends on Mg(2+) as a cofactor.

It carries out the reaction dUTP + H2O = dUMP + diphosphate + H(+). Its pathway is pyrimidine metabolism; dUMP biosynthesis; dUMP from dCTP (dUTP route): step 2/2. Functionally, this enzyme is involved in nucleotide metabolism: it produces dUMP, the immediate precursor of thymidine nucleotides and it decreases the intracellular concentration of dUTP so that uracil cannot be incorporated into DNA. In Beijerinckia indica subsp. indica (strain ATCC 9039 / DSM 1715 / NCIMB 8712), this protein is Deoxyuridine 5'-triphosphate nucleotidohydrolase.